A 1593-amino-acid polypeptide reads, in one-letter code: Autotransporter CRAC (1593 aa).

An N-terminal signal peptide occupies residues 1–54; the sequence is MNKVYNTVWNESTGMWVVTSELTRKGGRRPRQIRRTALAGLIAGLLLPSAPALA. A compositionally biased stretch (polar residues) spans 65–85; that stretch reads GATSSSMSLNAGDTATDTTIN. Disordered regions lie at residues 65-100 and 1267-1286; these read GATS…SATS and KADS…PVPP. Residues 86 to 97 are compositionally biased toward low complexity; sequence SGGSQRVSSGGS. The span at 1269 to 1280 shows a compositional bias: polar residues; sequence DSSQPGTDNPGT. The region spanning 1325-1593 is the Autotransporter domain; the sequence is NTRSPGGVWG…TGSVGFRINF (269 aa).

In terms of processing, glycosylated by heptosyltransferas BAHTCr. Glycosylation is required for adhesion to mammalian cells and colonization of the mouse host gastrointestinal tract.

It is found in the cell outer membrane. Functionally, autotransporter required for the colonization of the mouse host gastrointestinal tract, possibly by mediating bacteria adhesion to host cells. The chain is Autotransporter CRAC from Citrobacter rodentium (strain ICC168) (Citrobacter freundii biotype 4280).